The following is a 106-amino-acid chain: Iron-sulfur cluster assembly protein CyaY (106 aa).

The protein belongs to the frataxin family.

Involved in iron-sulfur (Fe-S) cluster assembly. May act as a regulator of Fe-S biogenesis. The protein is Iron-sulfur cluster assembly protein CyaY of Salmonella agona (strain SL483).